The sequence spans 177 residues: Large ribosomal subunit protein uL6 (177 aa).

Belongs to the universal ribosomal protein uL6 family. Part of the 50S ribosomal subunit.

Functionally, this protein binds to the 23S rRNA, and is important in its secondary structure. It is located near the subunit interface in the base of the L7/L12 stalk, and near the tRNA binding site of the peptidyltransferase center. The polypeptide is Large ribosomal subunit protein uL6 (Hahella chejuensis (strain KCTC 2396)).